The chain runs to 493 residues: MSAEEMVQIRLEDRCYPVSKSKLIEQSDYFRALYRSGMREAVRPEVGPEVQQLRGLSAPGLRLVLDFINAGGAREGWGLSEDELAEASVLSEMVEAASFLQVTALLRLLLSHVRLGNCLELYRLAQVYGLPDLQDACLRFMVLRFHQVLCQPQFPLLLSPPQAPGDCSLKQRLREARMRGTPVLVALGDFLGGPLAPHPYQGEPPSMLRYEETTERWFPLANNLPPDLVNVRGYGSAILDNYLFIVGGYRITSQEISAAHSYNPITNEWLQVASMNQKRSNFKLVAVNSKLYAIGGQAVSNVECYNPEQDAWNFVAPLPNPLAEFSACECKGKIYVIGGYTTRDRNMNILQYCPSADLWTLFETCDVHIRKQQMVSVEETIYIVGGCLHELGPNRRSSQSEDMLTVQSYNTVTRQWLYLKENTSKSGLNLTCALHNDGIYIMSRDVTLSTSLEHRVFLKYNIFADSWEAFRRFPAFGHNLLISSLYLPNKAET.

Positions 5–77 (EMVQIRLEDR…INAGGAREGW (73 aa)) constitute a BTB domain. Kelch repeat units lie at residues 183–241 (VLVA…ILDN), 242–289 (YLFI…AVNS), 291–332 (LYAI…ECKG), 334–379 (IYVI…SVEE), 381–436 (IYIV…ALHN), and 438–487 (GIYI…SLYL).

In terms of assembly, component of the BCR(KLHL42) E3 ubiquitin ligase complex, at least composed of CUL3 and KLHL42. Interacts (via the BTB domain) with CUL3. Interacts (via the kelch domains) with KATNA1.

Its subcellular location is the cytoplasm. The protein localises to the cytoskeleton. It localises to the spindle. Its pathway is protein modification; protein ubiquitination. Substrate-specific adapter of a BCR (BTB-CUL3-RBX1) E3 ubiquitin-protein ligase complex required for mitotic progression and cytokinesis. The BCR(KLHL42) E3 ubiquitin ligase complex mediates the ubiquitination and subsequent degradation of KATNA1. Involved in microtubule dynamics throughout mitosis. This Mus musculus (Mouse) protein is Kelch-like protein 42 (Klhl42).